Consider the following 86-residue polypeptide: Large ribosomal subunit protein uL23 (86 aa).

The protein belongs to the universal ribosomal protein uL23 family. Part of the 50S ribosomal subunit. Contacts protein L29.

Its function is as follows. Binds to 23S rRNA. One of the proteins that surrounds the polypeptide exit tunnel on the outside of the ribosome. In Methanococcus maripaludis (strain DSM 14266 / JCM 13030 / NBRC 101832 / S2 / LL), this protein is Large ribosomal subunit protein uL23.